Consider the following 565-residue polypeptide: NAD-dependent malic enzyme (565 aa).

Catalysis depends on Tyr-104, which acts as the Proton donor. Arg-157 is an NAD(+) binding site. The Proton acceptor role is filled by Lys-175. Glu-246, Asp-247, and Asp-270 together coordinate a divalent metal cation. NAD(+)-binding residues include Asp-270 and Asn-418.

Belongs to the malic enzymes family. In terms of assembly, homotetramer. The cofactor is Mg(2+). Mn(2+) serves as cofactor.

It catalyses the reaction (S)-malate + NAD(+) = pyruvate + CO2 + NADH. The catalysed reaction is oxaloacetate + H(+) = pyruvate + CO2. This is NAD-dependent malic enzyme from Escherichia coli O127:H6 (strain E2348/69 / EPEC).